Here is a 34-residue protein sequence, read N- to C-terminus: Colipase (34 aa).

Cystine bridges form between Cys12–Cys23 and Cys18–Cys34.

The protein belongs to the colipase family. Forms a 1:1 stoichiometric complex with pancreatic lipase. In terms of tissue distribution, expressed by the pancreas.

It is found in the secreted. In terms of biological role, colipase is a cofactor of pancreatic lipase. It allows the lipase to anchor itself to the lipid-water interface. Without colipase the enzyme is washed off by bile salts, which have an inhibitory effect on the lipase. In Gallus gallus (Chicken), this protein is Colipase (CLPS).